Reading from the N-terminus, the 291-residue chain is Secretory carrier-associated membrane protein 5 (291 aa).

The segment covering 1-10 (MGGRYDRNTF) has biased composition (basic and acidic residues). Residues 1-66 (MGGRYDRNTF…GSGAQDLKKK (66 aa)) are disordered. At 1–126 (MGGRYDRNTF…EILVRLQRLQ (126 aa)) the chain is on the cytoplasmic side. The residue at position 34 (Ser34) is a Phosphoserine. A coiled-coil region spans residues 58–94 (SGAQDLKKKEKELQAKEADLRRREQDLKRKQDAAARA). 4 helical membrane-spanning segments follow: residues 127 to 147 (YIAFATYLGLVLALFWNIIAV), 159 to 179 (IWLLAVIYFISGVPGGYVLWY), 194 to 214 (FGWFFLFYMLHILFCLFAAVA), and 242 to 262 (IFYFIGFGLFCLESVVSIWVI). Topologically, residues 263-288 (QQVYMYFRGSGKADDMRRDAARGAMR) are cytoplasmic.

This sequence belongs to the SCAMP family.

The protein localises to the cell membrane. It localises to the cytoplasmic vesicle. It is found in the secretory vesicle membrane. Its function is as follows. Probably involved in membrane trafficking. This Arabidopsis thaliana (Mouse-ear cress) protein is Secretory carrier-associated membrane protein 5 (SCAMP5).